A 141-amino-acid polypeptide reads, in one-letter code: Hemoglobin subunit alpha (141 aa).

Residues 1–141 (VLSSDDKCNV…VSSVLTSKYR (141 aa)) enclose the Globin domain. H58 is a binding site for O2. H87 is a binding site for heme b.

It belongs to the globin family. As to quaternary structure, heterotetramer of two alpha chains and two beta chains. Red blood cells.

Involved in oxygen transport from the lung to the various peripheral tissues. The protein is Hemoglobin subunit alpha (HBA) of Crocodylus niloticus (Nile crocodile).